The chain runs to 236 residues: tRNA1(Val) (adenine(37)-N6)-methyltransferase (236 aa).

It belongs to the methyltransferase superfamily. tRNA (adenine-N(6)-)-methyltransferase family.

Its subcellular location is the cytoplasm. The enzyme catalyses adenosine(37) in tRNA1(Val) + S-adenosyl-L-methionine = N(6)-methyladenosine(37) in tRNA1(Val) + S-adenosyl-L-homocysteine + H(+). Functionally, specifically methylates the adenine in position 37 of tRNA(1)(Val) (anticodon cmo5UAC). The sequence is that of tRNA1(Val) (adenine(37)-N6)-methyltransferase from Histophilus somni (strain 2336) (Haemophilus somnus).